The chain runs to 286 residues: Glycine--tRNA ligase alpha subunit (286 aa).

Belongs to the class-II aminoacyl-tRNA synthetase family. Tetramer of two alpha and two beta subunits.

It is found in the cytoplasm. It catalyses the reaction tRNA(Gly) + glycine + ATP = glycyl-tRNA(Gly) + AMP + diphosphate. This chain is Glycine--tRNA ligase alpha subunit, found in Thermotoga sp. (strain RQ2).